Here is a 176-residue protein sequence, read N- to C-terminus: Acireductone dioxygenase (176 aa).

His-81, His-83, Glu-87, and His-126 together coordinate Fe(2+). Ni(2+)-binding residues include His-81, His-83, Glu-87, and His-126.

The protein belongs to the acireductone dioxygenase (ARD) family. Fe(2+) is required as a cofactor. It depends on Ni(2+) as a cofactor.

It is found in the cytoplasm. It localises to the nucleus. It carries out the reaction 1,2-dihydroxy-5-(methylsulfanyl)pent-1-en-3-one + O2 = 4-methylsulfanyl-2-oxobutanoate + formate + 2 H(+). The enzyme catalyses 1,2-dihydroxy-5-(methylsulfanyl)pent-1-en-3-one + O2 = 3-(methylsulfanyl)propanoate + CO + formate + 2 H(+). The protein operates within amino-acid biosynthesis; L-methionine biosynthesis via salvage pathway; L-methionine from S-methyl-5-thio-alpha-D-ribose 1-phosphate: step 5/6. In terms of biological role, catalyzes 2 different reactions between oxygen and the acireductone 1,2-dihydroxy-3-keto-5-methylthiopentene (DHK-MTPene) depending upon the metal bound in the active site. Fe-containing acireductone dioxygenase (Fe-ARD) produces formate and 2-keto-4-methylthiobutyrate (KMTB), the alpha-ketoacid precursor of methionine in the methionine recycle pathway. Ni-containing acireductone dioxygenase (Ni-ARD) produces methylthiopropionate, carbon monoxide and formate, and does not lie on the methionine recycle pathway. The protein is Acireductone dioxygenase (adi1) of Sclerotinia sclerotiorum (strain ATCC 18683 / 1980 / Ss-1) (White mold).